Reading from the N-terminus, the 587-residue chain is MLRILGRRVVSASKELTSIQQWRIRPGTDSRPDPFRTFRGLQKGFCVGILPDGVDRNSEAFSSNSIAMEGILSELRSHIKKVLAGGGEEAVKRNRSRNKLLPRERIDRLLDPGSSFLELSQLAGHELYEEPLPSGGIITGIGPIHGRICMFMANDPTVKGGTYYPITIKKHLRAQEIAARCRLPCIYLVDSGGAYLPKQAEVFPDKENFGRVFYNESVMSSDGIPQIAIVLGSCTAGGAYIPAMADESVMVKGNGTIFLAGPPLVKAATGEEVSAEDLGGATVHCTVSGVSDYFAQDELHGLAIGRNIVKNLHMAAKQGMEGTFGSKNLVYKEPLYDINELRSIAPVDHKQQFDVRSIIARIVDGSEFDEFKKQYGTTLVTGFARIYGQTVGIIGNNGILFNESALKGAHFIELCSQRKIPLVFLQNITGFMVGSRAEANGIAKAGAKMVMAVSCAKVPKITIITGASFGAGNYAMCGRAYSPDFMFIWPNARIGIMGGAQAAGVLTQIERATKKRQGIKWTEEEEEAFKKKTVDAYEREANPYYSTARLWDDGVIDPCDTRKVLGLCLSAALNRPLEDTRFGVFRM.

A mitochondrion-targeting transit peptide spans 1-26 (MLRILGRRVVSASKELTSIQQWRIRP). The region spanning 68–324 (MEGILSELRS…AAKQGMEGTF (257 aa)) is the CoA carboxyltransferase N-terminal domain. The segment at 68–579 (MEGILSELRS…SAALNRPLED (512 aa)) is carboxyltransferase. In terms of domain architecture, CoA carboxyltransferase C-terminal spans 333–579 (EPLYDINELR…SAALNRPLED (247 aa)). The acyl-CoA binding stretch occupies residues 367–396 (EFDEFKKQYGTTLVTGFARIYGQTVGIIGN).

The protein belongs to the AccD/PCCB family. As to quaternary structure, probably a heterodimer composed of biotin-containing alpha subunits and beta subunits. In roots, cotyledons, leaves, flowers, ovaries, siliques and embryos.

It localises to the mitochondrion matrix. The catalysed reaction is 3-methylbut-2-enoyl-CoA + hydrogencarbonate + ATP = 3-methyl-(2E)-glutaconyl-CoA + ADP + phosphate + H(+). It functions in the pathway amino-acid degradation; L-leucine degradation; (S)-3-hydroxy-3-methylglutaryl-CoA from 3-isovaleryl-CoA: step 2/3. Carboxyltransferase subunit of the 3-methylcrotonyl-CoA carboxylase, an enzyme that catalyzes the conversion of 3-methylcrotonyl-CoA to 3-methylglutaconyl-CoA, a critical step for leucine and isovaleric acid catabolism. The chain is Methylcrotonoyl-CoA carboxylase beta chain, mitochondrial (MCCB) from Arabidopsis thaliana (Mouse-ear cress).